Here is a 343-residue protein sequence, read N- to C-terminus: Zinc finger CCCH domain-containing protein 39 (343 aa).

Residues 114–147 are a coiled coil; it reads LSHLADAADEAAALRQENAELRVANNDLACRIAK. 2 C3H1-type zinc fingers span residues 268–296 and 306–334; these read MFKTELCNKWEETGACPYGDQCQFAHGVA and RYKTQVCRMVLAGGVCPYGHRCHFRHSIT.

The sequence is that of Zinc finger CCCH domain-containing protein 39 from Oryza sativa subsp. japonica (Rice).